A 317-amino-acid polypeptide reads, in one-letter code: MTRIVFMGTPDFSVPVLRTLIEDGYEVVGVVTQPDRPKGRKKIMTPPPVKAEAERHGIPVLQPEKVRLEEEIEKVLSLKPDLIVTAAFGQILPKQLLDGPKYGCINVHASLLPELRGGAPIHYSILQGKKKTGVTIMYMVEKLDAGDMISKIEVEIDETDNVGTLHDKLSIAGAKLLSETVPNVISGNIKPIKQDESKATYAPNIKREQERIDWAKPGEEIYNQIRGLNPWPVAYTTLNGQNMKVWASEKVAAKTEAAPGTVIRTEQNGIVVASGNSTALLITELQPAGKKRMKGEDFVRGKNVQPGDVLGEANEEN.

110–113 (SLLP) provides a ligand contact to (6S)-5,6,7,8-tetrahydrofolate. Positions 292 to 317 (RMKGEDFVRGKNVQPGDVLGEANEEN) are disordered.

This sequence belongs to the Fmt family.

The enzyme catalyses L-methionyl-tRNA(fMet) + (6R)-10-formyltetrahydrofolate = N-formyl-L-methionyl-tRNA(fMet) + (6S)-5,6,7,8-tetrahydrofolate + H(+). Functionally, attaches a formyl group to the free amino group of methionyl-tRNA(fMet). The formyl group appears to play a dual role in the initiator identity of N-formylmethionyl-tRNA by promoting its recognition by IF2 and preventing the misappropriation of this tRNA by the elongation apparatus. The polypeptide is Methionyl-tRNA formyltransferase (Bacillus velezensis (strain DSM 23117 / BGSC 10A6 / LMG 26770 / FZB42) (Bacillus amyloliquefaciens subsp. plantarum)).